The primary structure comprises 325 residues: Germination protease (325 aa).

A propeptide spanning residues 1–7 (MYNVRTD) is cleaved from the precursor.

Belongs to the peptidase A25 family. As to quaternary structure, homotetramer. Autoproteolytically processed. The inactive tetrameric zymogen termed p46 autoprocesses to a smaller form termed p41, which is active only during spore germination.

The catalysed reaction is Endopeptidase action with P4 Glu or Asp, P1 preferably Glu &gt; Asp, P1' hydrophobic and P2' Ala.. Functionally, initiates the rapid degradation of small, acid-soluble proteins during spore germination. The protein is Germination protease of Clostridium perfringens (strain SM101 / Type A).